The chain runs to 134 residues: Large ribosomal subunit protein bL20 (134 aa).

This sequence belongs to the bacterial ribosomal protein bL20 family.

Its function is as follows. Binds directly to 23S ribosomal RNA and is necessary for the in vitro assembly process of the 50S ribosomal subunit. It is not involved in the protein synthesizing functions of that subunit. This Brucella anthropi (strain ATCC 49188 / DSM 6882 / CCUG 24695 / JCM 21032 / LMG 3331 / NBRC 15819 / NCTC 12168 / Alc 37) (Ochrobactrum anthropi) protein is Large ribosomal subunit protein bL20.